We begin with the raw amino-acid sequence, 80 residues long: Acyl carrier protein (80 aa).

The 76-residue stretch at 2-77 (SDTLKRLQKI…DALNYIENKI (76 aa)) folds into the Carrier domain. Serine 37 bears the O-(pantetheine 4'-phosphoryl)serine mark.

This sequence belongs to the acyl carrier protein (ACP) family. Post-translationally, 4'-phosphopantetheine is transferred from CoA to a specific serine of apo-ACP by AcpS. This modification is essential for activity because fatty acids are bound in thioester linkage to the sulfhydryl of the prosthetic group.

Its subcellular location is the plastid. The protein localises to the chloroplast. Its pathway is lipid metabolism; fatty acid biosynthesis. Its function is as follows. Carrier of the growing fatty acid chain in fatty acid biosynthesis. The chain is Acyl carrier protein from Cylindrotheca sp. (strain N1) (Marine diatom).